The primary structure comprises 298 residues: Homoserine kinase (298 aa).

85–95 contacts ATP; the sequence is PMGGLGSSAAS.

This sequence belongs to the GHMP kinase family. Homoserine kinase subfamily.

The protein resides in the cytoplasm. It carries out the reaction L-homoserine + ATP = O-phospho-L-homoserine + ADP + H(+). It participates in amino-acid biosynthesis; L-threonine biosynthesis; L-threonine from L-aspartate: step 4/5. Its function is as follows. Catalyzes the ATP-dependent phosphorylation of L-homoserine to L-homoserine phosphate. This Methanopyrus kandleri (strain AV19 / DSM 6324 / JCM 9639 / NBRC 100938) protein is Homoserine kinase.